The chain runs to 174 residues: Transmembrane protein 208 (174 aa).

3 consecutive transmembrane segments (helical) span residues 30-50 (NMAIGCAAPALLLSFLVFEVT), 54-74 (VFMHILSLLILGSSYQFMAFM), and 111-131 (GTLLLALISNYFWLVLLLAPI). The segment at 151 to 174 (AQDDNPQVDEKKQKKMDRRMRRMR) is disordered. Positions 163-174 (QKKMDRRMRRMR) are enriched in basic residues.

The protein belongs to the TMEM208 family. In terms of assembly, interacts with fz. In terms of tissue distribution, expressed in the brain.

It is found in the endoplasmic reticulum membrane. Its function is as follows. May play an important role during development and helps to maintain proper levels of Fz. This chain is Transmembrane protein 208, found in Drosophila melanogaster (Fruit fly).